The following is a 396-amino-acid chain: 1-deoxy-D-xylulose 5-phosphate reductoisomerase (396 aa).

6 residues coordinate NADPH: Thr-17, Gly-18, Ser-19, Ile-20, Asn-47, and Asn-130. Lys-131 serves as a coordination point for 1-deoxy-D-xylulose 5-phosphate. Glu-132 is an NADPH binding site. Asp-156 contributes to the Mn(2+) binding site. Residues Ser-157, Glu-158, Ser-182, and His-205 each contribute to the 1-deoxy-D-xylulose 5-phosphate site. Glu-158 contacts Mn(2+). NADPH is bound at residue Gly-211. Ser-218, Asn-223, Lys-224, and Glu-227 together coordinate 1-deoxy-D-xylulose 5-phosphate. Glu-227 is a binding site for Mn(2+).

This sequence belongs to the DXR family. The cofactor is Mg(2+). Mn(2+) serves as cofactor.

The enzyme catalyses 2-C-methyl-D-erythritol 4-phosphate + NADP(+) = 1-deoxy-D-xylulose 5-phosphate + NADPH + H(+). Its pathway is isoprenoid biosynthesis; isopentenyl diphosphate biosynthesis via DXP pathway; isopentenyl diphosphate from 1-deoxy-D-xylulose 5-phosphate: step 1/6. Its function is as follows. Catalyzes the NADPH-dependent rearrangement and reduction of 1-deoxy-D-xylulose-5-phosphate (DXP) to 2-C-methyl-D-erythritol 4-phosphate (MEP). The chain is 1-deoxy-D-xylulose 5-phosphate reductoisomerase from Rhizobium johnstonii (strain DSM 114642 / LMG 32736 / 3841) (Rhizobium leguminosarum bv. viciae).